Consider the following 535-residue polypeptide: MHDKILILDFGSQVTQLIARRVRDGRVYSEIHPYDCDPELIRKFIQEQGGKGIILSGGPSSVTEEGSPRAPQIVFELGVPVLGICYGMQTMATQLGGAVASAESLGKAREFGYSEVRAHGHTNLLKGIQDFSTSEGHGILKVWMSHGDSVTTLPSSFKLMASTESCPIAGMADEERSFYAFQFHPEVTHTIQGTAIIERFVHEICKCKPDWVMGDYIAEAVENIRKQVGDEEVILGLSGGVDSSVAAALIHRAIGDQLTCVFVDHGLLRLNEGDMVMEMFARNLGVKVIRVDAKETFMGELAGVSDPEAKRKIIGKEFVEIFQAESGKIKNAKWLAQGTIYPDVIESAGKGKKGAHTIKSHHNVGGLPEDMHLKLLEPLRELFKDEVRELGVALGLPREMVYRHPFPGPGLGVRILGEVKAEFASLLQRADAIFIEELRNTIDEVSQKSWYDLTSQAFAVFLPVKSVGVMGDGRTYEYVVALRAVQTQDFMTAHWAHLPHELLGKVFNRIINEVRGINRVVYDISGKPPATIEWE.

The Glutamine amidotransferase type-1 domain occupies Lys-4–Asp-210. Residue Cys-85 is the Nucleophile of the active site. Catalysis depends on residues His-184 and Glu-186. The 193-residue stretch at Trp-211–Arg-403 folds into the GMPS ATP-PPase domain. Ser-238–Ser-244 lines the ATP pocket.

In terms of assembly, homodimer.

It catalyses the reaction XMP + L-glutamine + ATP + H2O = GMP + L-glutamate + AMP + diphosphate + 2 H(+). It participates in purine metabolism; GMP biosynthesis; GMP from XMP (L-Gln route): step 1/1. Its function is as follows. Catalyzes the synthesis of GMP from XMP. This is GMP synthase [glutamine-hydrolyzing] from Polynucleobacter necessarius subsp. necessarius (strain STIR1).